The following is a 353-amino-acid chain: Photosystem II D2 protein (353 aa).

Position 2 is an N-acetylthreonine (T2). A Phosphothreonine modification is found at T2. Residues 41–61 form a helical membrane-spanning segment; that stretch reads CAYFAIGGWFTGTTFVTSWYT. Position 118 (H118) interacts with chlorophyll a. A helical membrane pass occupies residues 125-141; that stretch reads GFMLRQFELARSVQLRP. Residues Q130 and N143 each contribute to the pheophytin a site. The chain crosses the membrane as a helical span at residues 153–166; the sequence is VFVSVFLIYPLGQS. Position 198 (H198) interacts with chlorophyll a. The chain crosses the membrane as a helical span at residues 208–228; it reads AALLCAIHGATVENTLFEDGD. A plastoquinone-binding residues include H215 and F262. H215 lines the Fe cation pocket. H269 serves as a coordination point for Fe cation. Residues 279-295 form a helical membrane-spanning segment; sequence GLWMSALGVVGLALNLR.

It belongs to the reaction center PufL/M/PsbA/D family. In terms of assembly, PSII is composed of 1 copy each of membrane proteins PsbA, PsbB, PsbC, PsbD, PsbE, PsbF, PsbH, PsbI, PsbJ, PsbK, PsbL, PsbM, PsbT, PsbX, PsbY, PsbZ, Psb30/Ycf12, at least 3 peripheral proteins of the oxygen-evolving complex and a large number of cofactors. It forms dimeric complexes. It depends on The D1/D2 heterodimer binds P680, chlorophylls that are the primary electron donor of PSII, and subsequent electron acceptors. It shares a non-heme iron and each subunit binds pheophytin, quinone, additional chlorophylls, carotenoids and lipids. There is also a Cl(-1) ion associated with D1 and D2, which is required for oxygen evolution. The PSII complex binds additional chlorophylls, carotenoids and specific lipids. as a cofactor.

It localises to the plastid. It is found in the chloroplast thylakoid membrane. It carries out the reaction 2 a plastoquinone + 4 hnu + 2 H2O = 2 a plastoquinol + O2. In terms of biological role, photosystem II (PSII) is a light-driven water:plastoquinone oxidoreductase that uses light energy to abstract electrons from H(2)O, generating O(2) and a proton gradient subsequently used for ATP formation. It consists of a core antenna complex that captures photons, and an electron transfer chain that converts photonic excitation into a charge separation. The D1/D2 (PsbA/PsbD) reaction center heterodimer binds P680, the primary electron donor of PSII as well as several subsequent electron acceptors. D2 is needed for assembly of a stable PSII complex. The sequence is that of Photosystem II D2 protein from Carica papaya (Papaya).